A 266-amino-acid chain; its full sequence is Adaptin ear-binding coat-associated protein 2 (266 aa).

2 disordered regions span residues 164–191 (SMKK…LPPP) and 244–266 (GDFT…WVQF). At S181 the chain carries Phosphoserine. The WXXF motif 1 motif lies at 243-246 (WGDF). Positions 247 to 258 (TKSTGSTSSQTQ) are enriched in low complexity. The WXXF motif 2 motif lies at 263-266 (WVQF).

It belongs to the NECAP family. Interacts with AP1G1 and AP2A1 components of the adapter protein complexes AP-1 and AP-2. Interacts with the GAE domain proteins GGA1, GGA2 and GGA3.

Its subcellular location is the cytoplasmic vesicle. The protein resides in the clathrin-coated vesicle membrane. The protein localises to the cell membrane. Its function is as follows. Involved in endocytosis. In Bos taurus (Bovine), this protein is Adaptin ear-binding coat-associated protein 2 (NECAP2).